Here is a 1017-residue protein sequence, read N- to C-terminus: Rho-GTPase-activating protein LRG1 (1017 aa).

N-acetylmethionine is present on Met-1. LIM zinc-binding domains are found at residues 28–88 (CARC…LCQY) and 98–148 (CHVC…CKYH). Residues 155–184 (KRCKGCEFPISDQYIEFPKGEEIHCWHPEC) form the LIM zinc-binding 3; truncated domain. Positions 419–474 (CAGCNKYIQEECIQFYEHRWHIACFTCSSCHKNINPRSLTDPTFNKEKKKILCSHC) constitute an LIM zinc-binding 4 domain. Ser-562 is modified (phosphoserine). Residues 570-602 (TDLNDPTKQGDSKNLVIQTDDPSSSQQVSTREN) are disordered. A compositionally biased stretch (polar residues) spans 584–602 (LVIQTDDPSSSQQVSTREN). Residues 730-953 (APLDVLCEKW…YLITHNEEMA (224 aa)) enclose the Rho-GAP domain.

Interacts with CDC42, RHO1 and RHO2.

Its subcellular location is the cytoplasm. It is found in the bud. It localises to the bud neck. Functionally, acts in signal transduction. Activates CDC42, RHO1 and RHO2. Negatively regulates 1,3-beta-glucan synthesis. May be responsible for the down-regulation of CDC42 during mating. This is Rho-GTPase-activating protein LRG1 (LRG1) from Saccharomyces cerevisiae (strain ATCC 204508 / S288c) (Baker's yeast).